The chain runs to 233 residues: ATP-dependent dethiobiotin synthetase BioD (233 aa).

12–17 (GVGKTI) is a binding site for ATP. Thr16 is a binding site for Mg(2+). Residue Lys37 is part of the active site. Substrate is bound at residue Ser41. ATP is bound by residues Asp51, 112–115 (EGAG), and 202–204 (PKL). Asp51 and Glu112 together coordinate Mg(2+).

The protein belongs to the dethiobiotin synthetase family. Homodimer. Mg(2+) serves as cofactor.

It is found in the cytoplasm. The enzyme catalyses (7R,8S)-7,8-diammoniononanoate + CO2 + ATP = (4R,5S)-dethiobiotin + ADP + phosphate + 3 H(+). It participates in cofactor biosynthesis; biotin biosynthesis; biotin from 7,8-diaminononanoate: step 1/2. Functionally, catalyzes a mechanistically unusual reaction, the ATP-dependent insertion of CO2 between the N7 and N8 nitrogen atoms of 7,8-diaminopelargonic acid (DAPA, also called 7,8-diammoniononanoate) to form a ureido ring. This Bacillus velezensis (strain DSM 23117 / BGSC 10A6 / LMG 26770 / FZB42) (Bacillus amyloliquefaciens subsp. plantarum) protein is ATP-dependent dethiobiotin synthetase BioD.